The chain runs to 224 residues: Urease accessory protein UreF (224 aa).

This sequence belongs to the UreF family. As to quaternary structure, ureD, UreF and UreG form a complex that acts as a GTP-hydrolysis-dependent molecular chaperone, activating the urease apoprotein by helping to assemble the nickel containing metallocenter of UreC. The UreE protein probably delivers the nickel.

It is found in the cytoplasm. Functionally, required for maturation of urease via the functional incorporation of the urease nickel metallocenter. The polypeptide is Urease accessory protein UreF (Ectopseudomonas mendocina (strain ymp) (Pseudomonas mendocina)).